A 406-amino-acid polypeptide reads, in one-letter code: Glutamyl-tRNA(Gln) amidotransferase subunit D (406 aa).

In terms of domain architecture, Asparaginase/glutaminase spans 68–390 (KSISILATGG…EEFINVFNRN (323 aa)). Residues T78, T152, D153, and K230 contribute to the active site.

This sequence belongs to the asparaginase 1 family. GatD subfamily. As to quaternary structure, heterodimer of GatD and GatE.

It catalyses the reaction L-glutamyl-tRNA(Gln) + L-glutamine + ATP + H2O = L-glutaminyl-tRNA(Gln) + L-glutamate + ADP + phosphate + H(+). Functionally, allows the formation of correctly charged Gln-tRNA(Gln) through the transamidation of misacylated Glu-tRNA(Gln) in organisms which lack glutaminyl-tRNA synthetase. The reaction takes place in the presence of glutamine and ATP through an activated gamma-phospho-Glu-tRNA(Gln). The GatDE system is specific for glutamate and does not act on aspartate. In Thermoplasma volcanium (strain ATCC 51530 / DSM 4299 / JCM 9571 / NBRC 15438 / GSS1), this protein is Glutamyl-tRNA(Gln) amidotransferase subunit D.